A 418-amino-acid chain; its full sequence is 3-isopropylmalate dehydratase large subunit (418 aa).

Residues C299, C359, and C362 each coordinate [4Fe-4S] cluster.

It belongs to the aconitase/IPM isomerase family. LeuC type 2 subfamily. Heterodimer of LeuC and LeuD. [4Fe-4S] cluster serves as cofactor.

It carries out the reaction (2R,3S)-3-isopropylmalate = (2S)-2-isopropylmalate. It functions in the pathway amino-acid biosynthesis; L-leucine biosynthesis; L-leucine from 3-methyl-2-oxobutanoate: step 2/4. Its function is as follows. Catalyzes the isomerization between 2-isopropylmalate and 3-isopropylmalate, via the formation of 2-isopropylmaleate. This chain is 3-isopropylmalate dehydratase large subunit, found in Nitratidesulfovibrio vulgaris (strain DSM 19637 / Miyazaki F) (Desulfovibrio vulgaris).